The primary structure comprises 146 residues: Hemoglobin cathodic subunit beta (146 aa).

Residues 2-146 (EWSSSERSTI…LIHALSRQYF (145 aa)) enclose the Globin domain. Heme b-binding residues include H63 and H92.

It belongs to the globin family. In terms of assembly, heterotetramer of two alpha chains and two beta chains. In terms of tissue distribution, red blood cells.

In terms of biological role, involved in oxygen transport from gills to the various peripheral tissues. The chain is Hemoglobin cathodic subunit beta from Gymnothorax unicolor (Brown moray).